Consider the following 344-residue polypeptide: Golgi-associated RAB2 interactor protein 1B (344 aa).

It belongs to the GARIN family.

Its subcellular location is the golgi apparatus. Its function is as follows. RAB2B effector protein required for accurate acrosome formation and normal male fertility. In complex with RAB2A/RAB2B, seems to suppress excessive vesicle trafficking during acrosome formation. In Rattus norvegicus (Rat), this protein is Golgi-associated RAB2 interactor protein 1B (Garin1b).